We begin with the raw amino-acid sequence, 84 residues long: Mu-Sparatoxin-Hp1 (84 aa).

An N-terminal signal peptide occupies residues 1–20; sequence MKIAIVMTLLLVAFSTASFA. A propeptide spanning residues 21 to 35 is cleaved from the precursor; it reads IEPIERAALDLVMAR. 3 cysteine pairs are disulfide-bonded: Cys-54–Cys-68, Cys-61–Cys-73, and Cys-67–Cys-78. Leu-82 is modified (leucine amide).

As to expression, expressed by the venom gland.

It localises to the secreted. Its function is as follows. Weakly nhibits voltage-gated sodium channels Nav1.7/SCN9A. High concentration of the toxin (3 uM) inhibits Nav1.7/SCN9A currents by 79%. The sequence is that of Mu-Sparatoxin-Hp1 from Heteropoda pingtungensis (Pingtung huntsman spider).